The following is an 858-amino-acid chain: Bifunctional uridylyltransferase/uridylyl-removing enzyme (858 aa).

The uridylyltransferase stretch occupies residues 1–324 (MSASVAEPPP…PATSGVTRVL (324 aa)). The tract at residues 325–681 (SPGRFVEKQG…ARPSPVGDAL (357 aa)) is uridylyl-removing. The region spanning 443–565 (VDQHILMVLR…VGSERRLTAL (123 aa)) is the HD domain. ACT domains are found at residues 682 to 761 (QVLV…PEPS) and 790 to 858 (ILSV…AIAV).

It belongs to the GlnD family. Mg(2+) serves as cofactor.

It catalyses the reaction [protein-PII]-L-tyrosine + UTP = [protein-PII]-uridylyl-L-tyrosine + diphosphate. The catalysed reaction is [protein-PII]-uridylyl-L-tyrosine + H2O = [protein-PII]-L-tyrosine + UMP + H(+). With respect to regulation, uridylyltransferase (UTase) activity is inhibited by glutamine, while glutamine activates uridylyl-removing (UR) activity. Its function is as follows. Modifies, by uridylylation and deuridylylation, the PII regulatory proteins (GlnB and homologs), in response to the nitrogen status of the cell that GlnD senses through the glutamine level. Under low glutamine levels, catalyzes the conversion of the PII proteins and UTP to PII-UMP and PPi, while under higher glutamine levels, GlnD hydrolyzes PII-UMP to PII and UMP (deuridylylation). Thus, controls uridylylation state and activity of the PII proteins, and plays an important role in the regulation of nitrogen assimilation and metabolism. The sequence is that of Bifunctional uridylyltransferase/uridylyl-removing enzyme from Burkholderia mallei (strain ATCC 23344).